Reading from the N-terminus, the 662-residue chain is Rap guanine nucleotide exchange factor-like 1 (662 aa).

The tract at residues methionine 1–glutamate 149 is disordered. The segment covering valine 20–glycine 48 has biased composition (gly residues). The segment covering glycine 49–leucine 64 has biased composition (low complexity). Positions alanine 73 to proline 82 are enriched in pro residues. Residues leucine 120–glutamate 135 show a composition bias toward low complexity. The Ras-GEF domain maps to glutamate 424–asparagine 660.

Its function is as follows. Probable guanine nucleotide exchange factor (GEF). This Homo sapiens (Human) protein is Rap guanine nucleotide exchange factor-like 1 (RAPGEFL1).